Consider the following 103-residue polypeptide: Small ribosomal subunit protein uS10 (103 aa).

The protein belongs to the universal ribosomal protein uS10 family. As to quaternary structure, part of the 30S ribosomal subunit.

Functionally, involved in the binding of tRNA to the ribosomes. This is Small ribosomal subunit protein uS10 from Leptothrix cholodnii (strain ATCC 51168 / LMG 8142 / SP-6) (Leptothrix discophora (strain SP-6)).